We begin with the raw amino-acid sequence, 158 residues long: SsrA-binding protein (158 aa).

Belongs to the SmpB family.

It localises to the cytoplasm. Its function is as follows. Required for rescue of stalled ribosomes mediated by trans-translation. Binds to transfer-messenger RNA (tmRNA), required for stable association of tmRNA with ribosomes. tmRNA and SmpB together mimic tRNA shape, replacing the anticodon stem-loop with SmpB. tmRNA is encoded by the ssrA gene; the 2 termini fold to resemble tRNA(Ala) and it encodes a 'tag peptide', a short internal open reading frame. During trans-translation Ala-aminoacylated tmRNA acts like a tRNA, entering the A-site of stalled ribosomes, displacing the stalled mRNA. The ribosome then switches to translate the ORF on the tmRNA; the nascent peptide is terminated with the 'tag peptide' encoded by the tmRNA and targeted for degradation. The ribosome is freed to recommence translation, which seems to be the essential function of trans-translation. This is SsrA-binding protein from Hydrogenovibrio crunogenus (strain DSM 25203 / XCL-2) (Thiomicrospira crunogena).